Consider the following 484-residue polypeptide: Sushi domain-containing protein 4 (484 aa).

The first 35 residues, 1–35, serve as a signal peptide directing secretion; sequence MFHHADKGGKKSAFGHPVCGQIILSIILLRPPLLV. Sushi domains are found at residues 46 to 110, 111 to 168, 169 to 230, and 232 to 295; these read QICK…VCLS, EDCL…QPTC, QGCL…RCLD, and EACS…YCVK. Disulfide bonds link cysteine 48/cysteine 90, cysteine 76/cysteine 108, cysteine 113/cysteine 156, cysteine 138/cysteine 168, cysteine 171/cysteine 215, cysteine 201/cysteine 228, cysteine 234/cysteine 280, and cysteine 265/cysteine 293. 2 N-linked (GlcNAc...) asparagine glycosylation sites follow: asparagine 95 and asparagine 125. Asparagine 183 carries an N-linked (GlcNAc...) asparagine glycan. A helical membrane pass occupies residues 311–331; the sequence is WKVVACTATSVLLALLLVITA. Residues 374-484 form a disordered region; that stretch reads SGNYCQPPND…PLVEDGEEDC (111 aa). 2 stretches are compositionally biased toward polar residues: residues 424–442 and 449–467; these read DSLSDTSECLQGLQPSSSH and SEKTNAITSMEETASTSPS. Residues 470–484 show a composition bias toward acidic residues; sequence IADEIPLVEDGEEDC.

Its subcellular location is the membrane. The protein is Sushi domain-containing protein 4 (susd4) of Danio rerio (Zebrafish).